Here is a 228-residue protein sequence, read N- to C-terminus: Triosephosphate isomerase (228 aa).

Residue asparagine 9–lysine 11 participates in substrate binding. The active-site Electrophile is histidine 93. Glutamate 141 (proton acceptor) is an active-site residue. Substrate contacts are provided by residues isoleucine 146, glycine 180, and alanine 201 to serine 202.

The protein belongs to the triosephosphate isomerase family. As to quaternary structure, homotetramer; dimer of dimers.

It localises to the cytoplasm. The enzyme catalyses D-glyceraldehyde 3-phosphate = dihydroxyacetone phosphate. Its pathway is carbohydrate biosynthesis; gluconeogenesis. The protein operates within carbohydrate degradation; glycolysis; D-glyceraldehyde 3-phosphate from glycerone phosphate: step 1/1. Functionally, involved in the gluconeogenesis. Catalyzes stereospecifically the conversion of dihydroxyacetone phosphate (DHAP) to D-glyceraldehyde-3-phosphate (G3P). The chain is Triosephosphate isomerase from Metallosphaera sedula (strain ATCC 51363 / DSM 5348 / JCM 9185 / NBRC 15509 / TH2).